The primary structure comprises 323 residues: Thymidylate synthase (323 aa).

DUMP-binding positions include Arg21 and 172-173 (RR). Cys192 serves as the catalytic Nucleophile. Residues 214-217 (RSND), Asn225, and 255-257 (HVY) contribute to the dUMP site. Asp217 serves as a coordination point for (6R)-5,10-methylene-5,6,7,8-tetrahydrofolate. (6R)-5,10-methylene-5,6,7,8-tetrahydrofolate is bound at residue Ala322.

The protein belongs to the thymidylate synthase family. Bacterial-type ThyA subfamily. In terms of assembly, homodimer.

The protein resides in the cytoplasm. It catalyses the reaction dUMP + (6R)-5,10-methylene-5,6,7,8-tetrahydrofolate = 7,8-dihydrofolate + dTMP. It functions in the pathway pyrimidine metabolism; dTTP biosynthesis. Catalyzes the reductive methylation of 2'-deoxyuridine-5'-monophosphate (dUMP) to 2'-deoxythymidine-5'-monophosphate (dTMP) while utilizing 5,10-methylenetetrahydrofolate (mTHF) as the methyl donor and reductant in the reaction, yielding dihydrofolate (DHF) as a by-product. This enzymatic reaction provides an intracellular de novo source of dTMP, an essential precursor for DNA biosynthesis. The chain is Thymidylate synthase from Bordetella parapertussis (strain 12822 / ATCC BAA-587 / NCTC 13253).